Consider the following 72-residue polypeptide: Cytochrome b-c1 complex subunit 8 (72 aa).

Topologically, residues 2 to 41 are mitochondrial matrix; it reads GKQPVKLKAVVYAISPFQQKIMPGLWKDLPGKIHHKVSEN. The helical transmembrane segment at 42-59 threads the bilayer; it reads WISATLLLGPLVGTYSYV. The Mitochondrial intermembrane portion of the chain corresponds to 60-72; that stretch reads QHFLEKEKLEHRY.

Belongs to the UQCRQ/QCR8 family. Component of the ubiquinol-cytochrome c oxidoreductase (cytochrome b-c1 complex, complex III, CIII), a multisubunit enzyme composed of 3 respiratory subunits cytochrome b, cytochrome c1 and Rieske protein, 2 core protein subunits, and additional low-molecular weight protein subunits. The complex exists as an obligatory dimer and forms supercomplexes (SCs) in the inner mitochondrial membrane with cytochrome c oxidase (complex IV, CIV).

The protein resides in the mitochondrion inner membrane. Component of the ubiquinol-cytochrome c oxidoreductase, a multisubunit transmembrane complex that is part of the mitochondrial electron transport chain which drives oxidative phosphorylation. The respiratory chain contains 3 multisubunit complexes succinate dehydrogenase (complex II, CII), ubiquinol-cytochrome c oxidoreductase (cytochrome b-c1 complex, complex III, CIII) and cytochrome c oxidase (complex IV, CIV), that cooperate to transfer electrons derived from NADH and succinate to molecular oxygen, creating an electrochemical gradient over the inner membrane that drives transmembrane transport and the ATP synthase. The cytochrome b-c1 complex catalyzes electron transfer from ubiquinol to cytochrome c, linking this redox reaction to translocation of protons across the mitochondrial inner membrane, with protons being carried across the membrane as hydrogens on the quinol. In the process called Q cycle, 2 protons are consumed from the matrix, 4 protons are released into the intermembrane space and 2 electrons are passed to cytochrome c. The sequence is that of Cytochrome b-c1 complex subunit 8 from Solanum tuberosum (Potato).